Here is a 185-residue protein sequence, read N- to C-terminus: uncharacterized protein (185 aa).

Transmembrane regions (helical) follow at residues 4–24 (TYLTGYFPLIAILLFSSSLSI), 54–74 (LALFAAFALLYFMVLSALKLI), 98–118 (LRMGSMIYLGGGILSFVLLQN), 119–139 (VIWIVIWFAVVTLAYFVFTVY), and 153–173 (FILLELLFWFTFVIGILFIFI).

It is found in the cell membrane. This is an uncharacterized protein from Bacillus subtilis (strain 168).